A 128-amino-acid polypeptide reads, in one-letter code: Large-conductance mechanosensitive channel (128 aa).

Residues 1–16 (MNFIKEFREFAMRGNV) are Cytoplasmic-facing. The chain crosses the membrane as a helical span at residues 17-45 (VDMAVGVIIGSAFGKIVSSLVSDIFTPVL). The Periplasmic segment spans residues 46–74 (GILTGGIDFKDMKFVLAQAQGDVPAVTLN). The helical transmembrane segment at 75-94 (YGLFIQNVIDFIIIAFAIFM) threads the bilayer. At 95 to 128 (MIKVINKVRKPEEKKTAPKAETLLTEIRDLLKNK) the chain is on the cytoplasmic side.

It belongs to the MscL family. As to quaternary structure, homopentamer.

The protein localises to the cell inner membrane. In terms of biological role, channel that opens in response to stretch forces in the membrane lipid bilayer. Forms a nonselective ion channel with a conductance of about 4 nanosiemens. May participate in the regulation of osmotic pressure changes within the cell. This Haemophilus influenzae (strain ATCC 51907 / DSM 11121 / KW20 / Rd) protein is Large-conductance mechanosensitive channel.